The chain runs to 117 residues: Ubiquitin-like protein 3 (117 aa).

The Ubiquitin-like domain maps to 10 to 88; sequence INLRLILVSG…PFGKTTVMHL (79 aa). A lipid anchor (S-palmitoyl cysteine) is attached at C113. C114 is subject to Cysteine methyl ester. C114 carries the S-geranylgeranyl cysteine lipid modification. A propeptide spans 115 to 117 (removed in mature form); that stretch reads VIL.

The protein resides in the cell membrane. This is Ubiquitin-like protein 3 (Ubl3) from Mus musculus (Mouse).